The following is a 545-amino-acid chain: CTP synthase (545 aa).

An amidoligase domain region spans residues 1 to 266 (MTTNYIFVTG…DDYICKRFSL (266 aa)). Serine 14 is a CTP binding site. Serine 14 is a UTP binding site. ATP contacts are provided by residues 15-20 (SLGKGI) and aspartate 72. The Mg(2+) site is built by aspartate 72 and glutamate 140. CTP is bound by residues 147–149 (DIE), 187–192 (KTKPTQ), and lysine 223. Residues 187-192 (KTKPTQ) and lysine 223 contribute to the UTP site. Residue 239–241 (KDV) participates in ATP binding. The Glutamine amidotransferase type-1 domain maps to 291 to 542 (TIGMVGKYIE…VKAASEHQKR (252 aa)). Position 352 (glycine 352) interacts with L-glutamine. Cysteine 379 serves as the catalytic Nucleophile; for glutamine hydrolysis. L-glutamine contacts are provided by residues 380–383 (LGMQ), glutamate 403, and arginine 470. Active-site residues include histidine 515 and glutamate 517.

Belongs to the CTP synthase family. As to quaternary structure, homotetramer.

The catalysed reaction is UTP + L-glutamine + ATP + H2O = CTP + L-glutamate + ADP + phosphate + 2 H(+). The enzyme catalyses L-glutamine + H2O = L-glutamate + NH4(+). It catalyses the reaction UTP + NH4(+) + ATP = CTP + ADP + phosphate + 2 H(+). It participates in pyrimidine metabolism; CTP biosynthesis via de novo pathway; CTP from UDP: step 2/2. Allosterically activated by GTP, when glutamine is the substrate; GTP has no effect on the reaction when ammonia is the substrate. The allosteric effector GTP functions by stabilizing the protein conformation that binds the tetrahedral intermediate(s) formed during glutamine hydrolysis. Inhibited by the product CTP, via allosteric rather than competitive inhibition. Functionally, catalyzes the ATP-dependent amination of UTP to CTP with either L-glutamine or ammonia as the source of nitrogen. Regulates intracellular CTP levels through interactions with the four ribonucleotide triphosphates. This Salmonella arizonae (strain ATCC BAA-731 / CDC346-86 / RSK2980) protein is CTP synthase.